The chain runs to 212 residues: Thiamine-phosphate synthase (212 aa).

Residues 40–44 (QFREK) and Asn75 contribute to the 4-amino-2-methyl-5-(diphosphooxymethyl)pyrimidine site. 2 residues coordinate Mg(2+): Asp76 and Asp95. Ser113 lines the 4-amino-2-methyl-5-(diphosphooxymethyl)pyrimidine pocket. 139–141 (TTS) contributes to the 2-[(2R,5Z)-2-carboxy-4-methylthiazol-5(2H)-ylidene]ethyl phosphate binding site. Residue Lys142 coordinates 4-amino-2-methyl-5-(diphosphooxymethyl)pyrimidine. 2-[(2R,5Z)-2-carboxy-4-methylthiazol-5(2H)-ylidene]ethyl phosphate is bound by residues Gly171 and 191–192 (IS).

This sequence belongs to the thiamine-phosphate synthase family. It depends on Mg(2+) as a cofactor.

The catalysed reaction is 2-[(2R,5Z)-2-carboxy-4-methylthiazol-5(2H)-ylidene]ethyl phosphate + 4-amino-2-methyl-5-(diphosphooxymethyl)pyrimidine + 2 H(+) = thiamine phosphate + CO2 + diphosphate. The enzyme catalyses 2-(2-carboxy-4-methylthiazol-5-yl)ethyl phosphate + 4-amino-2-methyl-5-(diphosphooxymethyl)pyrimidine + 2 H(+) = thiamine phosphate + CO2 + diphosphate. It carries out the reaction 4-methyl-5-(2-phosphooxyethyl)-thiazole + 4-amino-2-methyl-5-(diphosphooxymethyl)pyrimidine + H(+) = thiamine phosphate + diphosphate. The protein operates within cofactor biosynthesis; thiamine diphosphate biosynthesis; thiamine phosphate from 4-amino-2-methyl-5-diphosphomethylpyrimidine and 4-methyl-5-(2-phosphoethyl)-thiazole: step 1/1. In terms of biological role, condenses 4-methyl-5-(beta-hydroxyethyl)thiazole monophosphate (THZ-P) and 2-methyl-4-amino-5-hydroxymethyl pyrimidine pyrophosphate (HMP-PP) to form thiamine monophosphate (TMP). This Staphylococcus saprophyticus subsp. saprophyticus (strain ATCC 15305 / DSM 20229 / NCIMB 8711 / NCTC 7292 / S-41) protein is Thiamine-phosphate synthase.